The following is a 510-amino-acid chain: Bifunctional purine biosynthesis protein PurH (510 aa).

The MGS-like domain occupies 1-143 (MTKRALISVS…KNHDAVLVLV (143 aa)).

This sequence belongs to the PurH family.

It catalyses the reaction (6R)-10-formyltetrahydrofolate + 5-amino-1-(5-phospho-beta-D-ribosyl)imidazole-4-carboxamide = 5-formamido-1-(5-phospho-D-ribosyl)imidazole-4-carboxamide + (6S)-5,6,7,8-tetrahydrofolate. The enzyme catalyses IMP + H2O = 5-formamido-1-(5-phospho-D-ribosyl)imidazole-4-carboxamide. It functions in the pathway purine metabolism; IMP biosynthesis via de novo pathway; 5-formamido-1-(5-phospho-D-ribosyl)imidazole-4-carboxamide from 5-amino-1-(5-phospho-D-ribosyl)imidazole-4-carboxamide (10-formyl THF route): step 1/1. Its pathway is purine metabolism; IMP biosynthesis via de novo pathway; IMP from 5-formamido-1-(5-phospho-D-ribosyl)imidazole-4-carboxamide: step 1/1. The polypeptide is Bifunctional purine biosynthesis protein PurH (Deinococcus radiodurans (strain ATCC 13939 / DSM 20539 / JCM 16871 / CCUG 27074 / LMG 4051 / NBRC 15346 / NCIMB 9279 / VKM B-1422 / R1)).